The following is a 119-amino-acid chain: Autophagy-related protein 8A (119 aa).

Gly-117 is lipidated: Phosphatidylethanolamine amidated glycine. A propeptide spans 118–119 (removed in mature form); the sequence is SA.

This sequence belongs to the ATG8 family. As to quaternary structure, interacts with ATG4. The C-terminal 2 residues are removed by ATG4 to expose Gly-117 at the C-terminus. The C-terminal Gly is then amidated with phosphatidylethanolamine by an activating system similar to that for ubiquitin. As to expression, constitutively expressed.

The protein localises to the cytoplasmic vesicle. It is found in the autophagosome membrane. It localises to the vacuole membrane. The protein resides in the cytoplasm. Its subcellular location is the cytoskeleton. Ubiquitin-like modifier involved in cytoplasm to vacuole transport (Cvt) vesicles and autophagosomes formation. May mediate the delivery of the vesicles and autophagosomes to the vacuole via the microtubule cytoskeleton. Functionally, ubiquitin-like modifier involved in autophagosomes formation. May mediate the delivery of the autophagosomes to the vacuole via the microtubule cytoskeleton. The sequence is that of Autophagy-related protein 8A (ATG8A) from Oryza sativa subsp. indica (Rice).